The sequence spans 497 residues: Probable malate:quinone oxidoreductase (497 aa).

Belongs to the MQO family. FAD serves as cofactor.

It carries out the reaction (S)-malate + a quinone = a quinol + oxaloacetate. Its pathway is carbohydrate metabolism; tricarboxylic acid cycle; oxaloacetate from (S)-malate (quinone route): step 1/1. This Exiguobacterium sibiricum (strain DSM 17290 / CCUG 55495 / CIP 109462 / JCM 13490 / 255-15) protein is Probable malate:quinone oxidoreductase.